The chain runs to 946 residues: Villin-4 (946 aa).

4 Gelsolin-like repeats span residues 28-109 (NFKP…ETEK), 152-219 (VHVK…EDGK), 274-339 (LEHE…TIMF), and 641-715 (EIHH…PQFF). Disordered regions lie at residues 744 to 789 (ATPS…GRSP), 801 to 832 (PSTRYLSTPPPAVKKLFPRSGGSELPKTSSKQ), and 844 to 902 (GPTK…PAPD). Polar residues predominate over residues 765 to 777 (QDKSQQRTRSMSH). Over residues 874 to 883 (SENEPEDDEN) the composition is skewed to acidic residues. Residues 881 to 946 (DENSTIYPYE…NRLKSDLQLF (66 aa)) enclose the HP domain.

Belongs to the villin/gelsolin family.

It localises to the cytoplasm. Its subcellular location is the cytoskeleton. In terms of biological role, ca(2+)-regulated actin-binding protein. Binds actin microfilaments (MFs). Involved in actin filament bundling, severing and capping. Caps the barbed end of actin filaments and is able to sever them in a calcium-dependent manner. In Oryza sativa subsp. japonica (Rice), this protein is Villin-4.